Consider the following 546-residue polypeptide: Glucose-6-phosphate isomerase (546 aa).

Glu-353 serves as the catalytic Proton donor. Active-site residues include His-384 and Lys-512.

Belongs to the GPI family.

Its subcellular location is the cytoplasm. It carries out the reaction alpha-D-glucose 6-phosphate = beta-D-fructose 6-phosphate. It functions in the pathway carbohydrate biosynthesis; gluconeogenesis. It participates in carbohydrate degradation; glycolysis; D-glyceraldehyde 3-phosphate and glycerone phosphate from D-glucose: step 2/4. Functionally, catalyzes the reversible isomerization of glucose-6-phosphate to fructose-6-phosphate. This Actinobacillus pleuropneumoniae serotype 3 (strain JL03) protein is Glucose-6-phosphate isomerase.